Consider the following 352-residue polypeptide: UDP-N-acetylglucosamine--N-acetylmuramyl-(pentapeptide) pyrophosphoryl-undecaprenol N-acetylglucosamine transferase (352 aa).

UDP-N-acetyl-alpha-D-glucosamine is bound by residues S195 and Q287.

Belongs to the glycosyltransferase 28 family. MurG subfamily.

The protein localises to the cell membrane. The catalysed reaction is Mur2Ac(oyl-L-Ala-gamma-D-Glu-L-Lys-D-Ala-D-Ala)-di-trans,octa-cis-undecaprenyl diphosphate + UDP-N-acetyl-alpha-D-glucosamine = beta-D-GlcNAc-(1-&gt;4)-Mur2Ac(oyl-L-Ala-gamma-D-Glu-L-Lys-D-Ala-D-Ala)-di-trans,octa-cis-undecaprenyl diphosphate + UDP + H(+). Its pathway is cell wall biogenesis; peptidoglycan biosynthesis. In terms of biological role, cell wall formation. Catalyzes the transfer of a GlcNAc subunit on undecaprenyl-pyrophosphoryl-MurNAc-pentapeptide (lipid intermediate I) to form undecaprenyl-pyrophosphoryl-MurNAc-(pentapeptide)GlcNAc (lipid intermediate II). This chain is UDP-N-acetylglucosamine--N-acetylmuramyl-(pentapeptide) pyrophosphoryl-undecaprenol N-acetylglucosamine transferase, found in Streptococcus pneumoniae (strain ATCC BAA-255 / R6).